The following is a 94-amino-acid chain: Small ribosomal subunit protein uS19 (94 aa).

The protein belongs to the universal ribosomal protein uS19 family.

In terms of biological role, protein S19 forms a complex with S13 that binds strongly to the 16S ribosomal RNA. This chain is Small ribosomal subunit protein uS19, found in Carboxydothermus hydrogenoformans (strain ATCC BAA-161 / DSM 6008 / Z-2901).